Reading from the N-terminus, the 326-residue chain is MDQNNSLPPYAQGLASPQGAMTPGIPIFSPMMPYGTGLTPQPIQNTNSLSILEEQQRQQQQQQQQQQQQQQQQQQQQQQQQQAVAAAAVQQSTSQQTTQGTSGQAPQLFHSQTLTTAPLPGTTPLYPSPVTPMTPITPATPASESSGIVPQLQNIVSTVNLGCKLDLKTIALRARNAEYNPKRFAAVIMRIREPRTTALIFSSGKMVCTGAKSEEQSRLAARKYARVVQKLGFPAKFLDFKIQNMVGSCDVKFPIRLEGLVLTHQQFSSYEPELFPGLIYRMIKPRIVLLIFVSGKVVLTGAKVRAEIYEAFENIYPILKGFRKTT.

2 disordered regions span residues 1–21 (MDQN…QGAM) and 114–146 (LTTA…SESS). The span at 114 to 125 (LTTAPLPGTTPL) shows a compositional bias: low complexity. A run of 2 repeats spans residues 152–228 (LQNI…ARVV) and 242–319 (IQNM…YPIL). Residues N154, R190, K205, N244, and R281 each contribute to the DNA site.

This sequence belongs to the TBP family. Binds DNA as monomer. Belongs to the TFIID complex together with the TBP-associated factors (TAFs). Part of a TFIID-containing RNA polymerase II pre-initiation complex that is composed of TBP and at least GTF2A1, GTF2A2, GTF2E1, GTF2E2, GTF2F1, GTF2H2, GTF2H3, GTF2H4, GTF2H5, GTF2B, TCEA1, ERCC2, ERCC3, TAF1, TAF2, TAF3, TAF4, TAF5, TAF6, TAF7, TAF8, TAF9, TAF10, TAF11, TAF12 and TAF13. Component of the transcription factor SL1/TIF-IB complex, composed of TBP and at least TAF1A, TAF1B, TAF1C and TAF1D. Association of TBP to form either TFIID or SL1/TIF-IB appears to be mutually exclusive. Interacts with TAF1A, TAF1B and TAF1C. Interacts with TFIIB, NCOA6, DRAP1, DR1 and ELF3. Interacts with SPIB, SNAPC1, SNAPC2 and SNAPC4. Interacts with UTF1. Interacts with BRF2; this interaction promotes recruitment of BRF2 to TATA box-containing promoters. Interacts with UBTF. Interacts with GPBP1. Interacts with CITED2. Interacts with ATF7IP. Interacts with LLPH. Interacts with HSF1 (via transactivation domain). Interacts with GTF2B (via C-terminus); this interaction with promoter-bound TBP guides RNA polymerase II into the pre-initiation complex (PIC). Interacts with PAX5. Interacts with MSX1; the interaction may inhibit MSX1 autoinactivation.

Its subcellular location is the nucleus. Functionally, general transcription factor that functions at the core of the DNA-binding multiprotein factor TFIID. Binding of TFIID to the TATA box is the initial transcriptional step of the pre-initiation complex (PIC), playing a role in the activation of eukaryotic genes transcribed by RNA polymerase II. Component of a BRF2-containing transcription factor complex that regulates transcription mediated by RNA polymerase III. Component of the transcription factor SL1/TIF-IB complex, which is involved in the assembly of the PIC (pre-initiation complex) during RNA polymerase I-dependent transcription. The rate of PIC formation probably is primarily dependent on the rate of association of SL1 with the rDNA promoter. SL1 is involved in stabilization of nucleolar transcription factor 1/UBTF on rDNA. The polypeptide is TATA-box-binding protein (TBP) (Macaca fascicularis (Crab-eating macaque)).